We begin with the raw amino-acid sequence, 498 residues long: Cytochrome P450 monooxygenase 110 (498 aa).

A helical transmembrane segment spans residues 7-24 (YVFALLGILATLYFVRWS). The N-linked (GlcNAc...) asparagine glycan is linked to Asn-425. Cys-440 provides a ligand contact to heme.

This sequence belongs to the cytochrome P450 family. Heme is required as a cofactor.

Its subcellular location is the membrane. The protein operates within secondary metabolite biosynthesis. Cytochrome P450 monooxygenase that is able to use dehydroabietic acid and testosterone as substrates for oxidation, suggesting that the natural substrate(s) may be structurally related to steroid compounds. The protein is Cytochrome P450 monooxygenase 110 of Postia placenta (strain ATCC 44394 / Madison 698-R) (Brown rot fungus).